The chain runs to 256 residues: tRNA-cytidine(32) 2-sulfurtransferase 1 (256 aa).

Positions 38–43 match the PP-loop motif motif; it reads SGGKDS. [4Fe-4S] cluster-binding residues include Cys113, Cys116, and Cys204.

It belongs to the TtcA family. Homodimer. Mg(2+) serves as cofactor. Requires [4Fe-4S] cluster as cofactor.

The protein resides in the cytoplasm. It carries out the reaction cytidine(32) in tRNA + S-sulfanyl-L-cysteinyl-[cysteine desulfurase] + AH2 + ATP = 2-thiocytidine(32) in tRNA + L-cysteinyl-[cysteine desulfurase] + A + AMP + diphosphate + H(+). The protein operates within tRNA modification. Catalyzes the ATP-dependent 2-thiolation of cytidine in position 32 of tRNA, to form 2-thiocytidine (s(2)C32). The sulfur atoms are provided by the cysteine/cysteine desulfurase (IscS) system. This is tRNA-cytidine(32) 2-sulfurtransferase 1 from Francisella philomiragia subsp. philomiragia (strain ATCC 25017 / CCUG 19701 / FSC 153 / O#319-036).